Consider the following 477-residue polypeptide: Aspartyl/glutamyl-tRNA(Asn/Gln) amidotransferase subunit B (477 aa).

This sequence belongs to the GatB/GatE family. GatB subfamily. Heterotrimer of A, B and C subunits.

It carries out the reaction L-glutamyl-tRNA(Gln) + L-glutamine + ATP + H2O = L-glutaminyl-tRNA(Gln) + L-glutamate + ADP + phosphate + H(+). The enzyme catalyses L-aspartyl-tRNA(Asn) + L-glutamine + ATP + H2O = L-asparaginyl-tRNA(Asn) + L-glutamate + ADP + phosphate + 2 H(+). Allows the formation of correctly charged Asn-tRNA(Asn) or Gln-tRNA(Gln) through the transamidation of misacylated Asp-tRNA(Asn) or Glu-tRNA(Gln) in organisms which lack either or both of asparaginyl-tRNA or glutaminyl-tRNA synthetases. The reaction takes place in the presence of glutamine and ATP through an activated phospho-Asp-tRNA(Asn) or phospho-Glu-tRNA(Gln). This Legionella pneumophila subsp. pneumophila (strain Philadelphia 1 / ATCC 33152 / DSM 7513) protein is Aspartyl/glutamyl-tRNA(Asn/Gln) amidotransferase subunit B.